The sequence spans 770 residues: MAQWNQLQQLDTRYLEQLHQLYSDSFPMELRQFLAPWIESQDWAYAASKESHATLVFHNLLGEIDQQYSRFLQESNVLYQHNLRRIKQFLQSRYLEKPMEIARIVARCLWEESRLLQTAATAAQQGGQANHPTAAVVTEKQQMLEQHLQDVRKRVQDLEQKMKVVENLQDDFDFNYKTLKSQGDMQDLNGNNQSVTRQKMQQLEQMLTALDQMRRSIVSELAGLLSAMEYVQKTLTDEELADWKRRQQIACIGGPPNICLDRLENWITSLAESQLQTRQQIKKLEELQQKVSYKGDPIVQHRPMLEERIVDLFRNLMKSAFVVERQPCMPMHPDRPLVIKTGVQFTTKVRLLVKFPELNYQLKIKVCIDKDSGDVAALRGSRKFNILGTNTKVMNMEESNNGSLSAEFKHLTLREQRCGNGGRANCDASLIVTEELHLITFETEVYHQGLKIDLETHSLPVVVISNICQMPNAWASILWYNMLTNNPKNVNFFTKPPIGTWDQVAEVLSWQFSSTTKRGLSIEQLTTLAEKLLGPGVNYSGCQITWAKFCKENMAGKGFSFWVWLDNIIDLVKKYILALWNEGYIMGFISKERERAILSTKPPGTFLLRFSESSKEGGVTFTWVEKDISGKTQIQSVEPYTKQQLNNMSFAEIIMGYKIMDATNILVSPLVYLYPDIPKEEAFGKYCRPESQEHPEADPGSAAPYLKTKFICVTPTTCSNTIDLPMSPRTLDSLMQFGNNGEGAEPSAGGQFESLTFDMDLTSECATSPM.

Alanine 2 carries the post-translational modification N-acetylalanine. N6-acetyllysine is present on residues lysine 49 and lysine 87. An Essential for nuclear import motif is present at residues 150–162 (DVRKRVQDLEQKM). The SH2 domain maps to 580-670 (WNEGYIMGFI…DATNILVSPL (91 aa)). Lysine 601, lysine 615, and lysine 631 each carry allysine; alternate. Residues lysine 601, lysine 615, and lysine 631 each carry the N6-acetyllysine; alternate modification. At tyrosine 640 the chain carries Phosphotyrosine; by TYK2. Lysine 685 carries the allysine; alternate modification. At lysine 685 the chain carries N6-acetyllysine; alternate. Tyrosine 705 is modified (phosphotyrosine; by FER and PTK6). Lysine 707 bears the N6-acetyllysine mark. At threonine 714 the chain carries Phosphothreonine. The residue at position 727 (serine 727) is a Phosphoserine; by DYRK2, NLK, NEK6, IRAK1, RPS6KA5, ZIPK/DAPK3 and PKC/PRKCE.

It belongs to the transcription factor STAT family. As to quaternary structure, forms a homodimer or a heterodimer with a related family member (at least STAT1). Component of a promoter-binding complex composed of STAT3, NFATC3 and NFATC4; complex formation is enhanced by calcineurin. Interacts with IL31RA, NCOA1, PELP1, SIPAR, SOCS7, STATIP1 and TMF1. Interacts with IL23R in presence of IL23. Interacts (via SH2 domain) with NLK. Interacts with ARL2BP; the interaction is enhanced by LIF and JAK1 expression. Interacts with KPNA4 and KPNA5; KPNA4 may be the primary mediator of nuclear import. Interacts with CAV2; the interaction is increased on insulin-induced tyrosine phosphorylation of CAV2 and leads to STAT3 activation. Interacts with ARL2BP; interaction is enhanced with ARL2. Interacts with NEK6. Binds to CDK9 when activated and nuclear. Interacts with BMX. Interacts with ZIPK/DAPK3. Interacts with PIAS3; the interaction occurs on stimulation by IL6, CNTF or OSM and inhibits the DNA binding activity of STAT3. In prostate cancer cells, interacts with PRKCE and promotes DNA binding activity of STAT3. Interacts with STMN3, antagonizing its microtubule-destabilizing activity. Interacts with the 'Lys-129' acetylated form of BIRC5/survivin. Interacts with FER. Interacts (via SH2 domain) with EIF2AK2/PKR (via the kinase catalytic domain). Interacts with FGFR4. Interacts with INPP5F; the interaction is independent of STAT3 Tyr-705 phosphorylation status. Interacts with OCIAD1 and OCIAD2. Interacts (unphosphorylated or phosphorylated at Ser-727) with PHB1. Interacts and may form heterodimers with NHLH1. Found in a complex with SLC39A6, SLC39A10 and with the 'Ser-727' phosphorylated form of STAT3 throughout mitosis. Interacts (when acetylated) with EP300 (via bromo domain); interaction takes place following STAT3 acetylation by EP300 and promotes enhanceosome assembly. Interacts (when acetylated) with BRD2 (via bromo domain); interaction promotes STAT3 recruitment to chromatin and T-helper Th17 cell differentiation. Interacts with FAM220A/SIPAR; the interaction occurs in both the nucleus and the cytoplasm, is enhanced by IL6 and promotes STAT3 dephosphorylation. Interacts in both unphosphorylated and phosphorylated forms with FAM220A but interacts preferentially in the phosphorylated form in the nucleus. Interacts with PTPN2; the interaction is promoted by FAM220A and leads to STAT3 dephosphorylation which negatively regulates STAT3 transcriptional activator activity. Post-translationally, activated through tyrosine phosphorylation by BMX. Tyrosine phosphorylated in response to IL6, IL11, CNTF, LIF, KITLG/SCF, CSF1, EGF, PDGF, IFN-alpha and OSM. Activated KIT promotes phosphorylation on tyrosine residues and subsequent translocation to the nucleus. Tyrosine phosphorylated in response to constitutively activated FGFR1, FGFR2, FGFR3 and FGFR4. Phosphorylated on serine upon DNA damage, probably by ATM or ATR. Serine phosphorylation is important for the formation of stable DNA-binding STAT3 homodimers and maximal transcriptional activity. ARL2BP may participate in keeping the phosphorylated state of STAT3 within the nucleus. Tyrosine phosphorylated upon stimulation with EGF. Upon LPS challenge, phosphorylated within the nucleus by IRAK1. Phosphorylated on Ser-727 by RPS6KA5. Dephosphorylation on tyrosine residues by PTPN2 negatively regulates IL6/interleukin-6 signaling. Phosphorylation at Tyr-705 by FER, isoform M2 of PKM (PKM2) or PTK6 leads to an increase of its transcriptional activity. Phosphorylation at Tyr-705 is increased in the presence of calcineurin. Phosphorylation at Tyr-640 by TYK2 negatively regulates transcriptional activity. In terms of processing, acetylated on lysine residues by EP300/p300, promoting its activation. Acetylation at Lys-49 and Lys-87 by EP300/p300 promotes its activation. Acetylation at Lys-87 by EP300/p300 promotes its association with BRD2 and recruitment to chromatin. Deacetylated at Lys-49 and Lys-87 by HDAC1. Acetylation at Lys-685 by EP300/p300 promotes its homodimerization and activation. Deacetylated at Lys-685 by HDAC3. Acetylated on lysine residues by CREBBP. Deacetylation by LOXL3 leads to disrupt STAT3 dimerization and inhibit STAT3 transcription activity. Oxidation of lysine residues to allysine on STAT3 preferentially takes place on lysine residues that are acetylated. Some lysine residues are oxidized to allysine by LOXL3, leading to disrupt STAT3 dimerization and inhibit STAT3 transcription activity. Oxidation of lysine residues to allysine on STAT3 preferentially takes place on lysine residues that are acetylated. As to expression, detected in lung, heart, oviduct, ovary, uterus and kidney (at protein level). Expressed in cardiomyocytes (at protein level). Detected in ovary, oviduct, and at lower levels in uterus and lung.

It is found in the cytoplasm. The protein localises to the nucleus. In terms of biological role, signal transducer and transcription activator that mediates cellular responses to interleukins, KITLG/SCF, LEP and other growth factors. Once activated, recruits coactivators, such as NCOA1 or MED1, to the promoter region of the target gene. May mediate cellular responses to activated FGFR1, FGFR2, FGFR3 and FGFR4. Upon activation of IL6ST/gp130 signaling by interleukin-6 (IL6), binds to the IL6-responsive elements identified in the promoters of various acute-phase protein genes. Activated by IL31 through IL31RA. Acts as a regulator of inflammatory response by regulating differentiation of naive CD4(+) T-cells into T-helper Th17 or regulatory T-cells (Treg): acetylation promotes its transcription activity and cell differentiation while deacetylation and oxidation of lysine residues by LOXL3 inhibits differentiation. Involved in cell cycle regulation by inducing the expression of key genes for the progression from G1 to S phase, such as CCND1. Mediates the effects of LEP on melanocortin production, body energy homeostasis and lactation. May play an apoptotic role by transctivating BIRC5 expression under LEP activation. Cytoplasmic STAT3 represses macroautophagy by inhibiting EIF2AK2/PKR activity. Plays a crucial role in basal beta cell functions, such as regulation of insulin secretion. Following JAK/STAT signaling activation and as part of a complex with NFATC3 and NFATC4, binds to the alpha-beta E4 promoter region of CRYAB and activates transcription in cardiomyocytes. Plays an important role in host defense in methicillin-resistant S.aureus lung infection by regulating the expression of the antimicrobial lectin REG3G. This Rattus norvegicus (Rat) protein is Signal transducer and activator of transcription 3 (Stat3).